We begin with the raw amino-acid sequence, 445 residues long: Reticulon-4 receptor-like 1 (445 aa).

An N-terminal signal peptide occupies residues 1-24 (MLRKGCCVELLLLLLAGELPLSGG). One can recognise an LRRNT domain in the interval 25–54 (CPRDCVCYPSPMTVSCQAHNFAAIPEGIPE). LRR repeat units lie at residues 55-76 (DSERIFLQNNHITFLQQGHFSP), 77-98 (AMVTLWIYSNNITFIAPNTFEG), 101-123 (HLEELDLGDNRQLRTLAPETFQG), 126-147 (KLHALYLYKCGLSSLPAGIFGG), 150-171 (SLQYLYLQDNHIEYLQDDIFVD), 174-195 (NLSHLFLHGNKLWSLGQGIFRG), 198-219 (NLDRLLLHENQLQWVHHKAFHD), and 222-243 (RLTTLFLFNNSLTELQGDCLAP). In terms of domain architecture, LRRCT spans 255 to 306 (NAWDCGCRARSLWEWLRRFRGSSSVVPCATPELRQGQDLKSLRVEDFRNCTG). 2 disordered regions span residues 304 to 380 (CTGP…ELPE) and 401 to 421 (RPKRKGKCARRTPIRAPSGVQ). Basic residues-rich tracts occupy residues 352–366 (GSKKPGKNCTSHRNR) and 401–413 (RPKRKGKCARRTP). Ser424 carries the GPI-anchor amidated serine lipid modification. Residues 424–444 (SSGTALGVSLLAWILGLVVSL) traverse the membrane as a helical segment. The propeptide at 425–445 (SGTALGVSLLAWILGLVVSLR) is removed in mature form.

It belongs to the Nogo receptor family. In terms of assembly, identified in a complex that contains RTN4R, RTN4RL1 and NGFR; the interaction depends on the presence of chondroitin sulfate proteoglycans. Does not interact with MAG, OMG and RTN4. Detected in brain (at protein level). Expressed in various regions of the brain, including the cerebral cortex, hippocampus, striatum, thalamus and cerebellum.

Its subcellular location is the cell membrane. The protein resides in the membrane raft. The protein localises to the perikaryon. It localises to the cell projection. Cell surface receptor. Plays a functionally redundant role in postnatal brain development and in regulating axon regeneration in the adult central nervous system. Contributes to normal axon migration across the brain midline and normal formation of the corpus callosum. Protects motoneurons against apoptosis; protection against apoptosis is probably mediated by MAG. Plays a role in inhibiting neurite outgrowth and axon regeneration via its binding to neuronal chondroitin sulfate proteoglycans. Binds heparin. Like other family members, plays a role in restricting the number dendritic spines and the number of synapses that are formed during brain development. Signaling mediates activation of Rho and downstream reorganization of the actin cytoskeleton. The protein is Reticulon-4 receptor-like 1 of Rattus norvegicus (Rat).